Here is a 534-residue protein sequence, read N- to C-terminus: UDP-glucuronosyltransferase 1A5 (534 aa).

A signal peptide spans 1 to 28 (MATGLQVPLPQLATGLLLLLSVQPWAES). Asn-119, Asn-296, and Asn-348 each carry an N-linked (GlcNAc...) asparagine glycan. The chain crosses the membrane as a helical span at residues 492–508 (VIGFLLAVVLTVAFITF).

Belongs to the UDP-glycosyltransferase family. As to quaternary structure, homodimer. Homooligomer. Interacts with UGT1A1, UGT1A3, UGT1A4, UGT1A6, UGT1A7, UGT1A8, UGT1A9 and UGT1A10 to form heterodimers. Isoform 1 interacts with isoform 2/i2 suggesting that oligomerization is involved in negative regulation of transferase activity by isoform 2. Isoform 1 also interacts with respective i2 isoforms of UGT1A1, UGT1A3, UGT1A4, UGT1A6, UGT1A7, UGT1A8, UGT1A9 and UGT1A10. Isoform 1 and isoform 2 are expressed in colon and small intestine. Neither isoform is expressed in liver, kidney or esophagus.

The protein resides in the endoplasmic reticulum membrane. It catalyses the reaction glucuronate acceptor + UDP-alpha-D-glucuronate = acceptor beta-D-glucuronoside + UDP + H(+). The enzyme catalyses zolasartan + UDP-alpha-D-glucuronate = zolarsartan-1-N-beta-D-glucuronide + UDP. In terms of biological role, UDP-glucuronosyltransferase (UGT) that catalyzes phase II biotransformation reactions in which lipophilic substrates are conjugated with glucuronic acid to increase the metabolite's water solubility, thereby facilitating excretion into either the urine or bile. Essential for the elimination and detoxification of drugs, xenobiotics and endogenous compounds. Involved in the glucuronidation of the AGTR1 angiotensin receptor antagonist zolarsatan, a drug which can inhibit the effect of angiotensin II. Functionally, lacks UGT glucuronidation activity but acts as a negative regulator of isoform 1. The polypeptide is UDP-glucuronosyltransferase 1A5 (Homo sapiens (Human)).